A 360-amino-acid chain; its full sequence is Glutamate 5-kinase (360 aa).

Lys-7 is an ATP binding site. Residues Ser-47, Asp-134, and Asn-146 each contribute to the substrate site. Residues 166 to 167 and 210 to 216 contribute to the ATP site; these read TD and TGGISTK. Positions 275–356 constitute a PUA domain; that stretch reads VGKITLDDGA…SSIIVVHRDV (82 aa).

This sequence belongs to the glutamate 5-kinase family.

The protein localises to the cytoplasm. The enzyme catalyses L-glutamate + ATP = L-glutamyl 5-phosphate + ADP. It functions in the pathway amino-acid biosynthesis; L-proline biosynthesis; L-glutamate 5-semialdehyde from L-glutamate: step 1/2. Functionally, catalyzes the transfer of a phosphate group to glutamate to form L-glutamate 5-phosphate. This chain is Glutamate 5-kinase, found in Prochlorococcus marinus (strain MIT 9301).